Reading from the N-terminus, the 468-residue chain is MVKPVIFAICLGVLLSKALSIPLRSFADIELIGSQKSLFPFLGGSAPYFSFPANYGIPTDIPEGCRLTQVQMIGRHGERYPTRSEAKDIFEVWYKISNYTGKYEGSLSFLNNGYEFFIPDESLLEMETTLQNSIDVLNPYTGEMNAKRHAREFLAKYGKLMENCTNFPIFTTNSKRIYDTAQYFAEALGDGFNISLQTLSENSSSGANTLAAKSSCPNWNSNANNDILMSYSRDYLENISDRLNDENKGLNLSRKDAAALFSWCAFELNAKGYSNICDIFSAAELIHYSYETDLTSFYQNGPGYKLIKSIGANLFNATVKLIRQSAHLDQKVWLSFTHDTDILNYLTTAGLIDDTRNLTTNHVPFRDHSYHRSWYIPQGARVYTEKFQCSNDSYVRYVVNDAVVPIESCSSGPGFSCEEGTFYEYAKDRLRGVSFYEDCDVSKVSKEKELTFYWDWNTTRYNASLVNQ.

An N-terminal signal peptide occupies residues 1 to 20; the sequence is MVKPVIFAICLGVLLSKALS. Catalysis depends on His-76, which acts as the Nucleophile. Residues Asn-98, Asn-163, Asn-193, Asn-202, Asn-238, Asn-251, and Asn-316 are each glycosylated (N-linked (GlcNAc...) asparagine). The active-site Proton donor is the Asp-339. Asn-357, Asn-391, Asn-457, and Asn-462 each carry an N-linked (GlcNAc...) asparagine glycan.

This sequence belongs to the histidine acid phosphatase family.

It carries out the reaction a phosphate monoester + H2O = an alcohol + phosphate. This is Probable acid phosphatase DIA3 (DIA3) from Saccharomyces cerevisiae (strain ATCC 204508 / S288c) (Baker's yeast).